The following is a 171-amino-acid chain: Endoribonuclease YbeY (171 aa).

Residues His126, His130, and His136 each coordinate Zn(2+).

The protein belongs to the endoribonuclease YbeY family. The cofactor is Zn(2+).

It is found in the cytoplasm. In terms of biological role, single strand-specific metallo-endoribonuclease involved in late-stage 70S ribosome quality control and in maturation of the 3' terminus of the 16S rRNA. The protein is Endoribonuclease YbeY of Rhizobium leguminosarum bv. trifolii (strain WSM2304).